Consider the following 173-residue polypeptide: Photosystem I assembly protein Ycf3 (173 aa).

3 TPR repeats span residues 35 to 68 (AFVY…EEDT), 72 to 105 (GYIL…NPRL), and 120 to 153 (GEKE…APNN).

It belongs to the Ycf3 family.

The protein resides in the cellular thylakoid membrane. Essential for the assembly of the photosystem I (PSI) complex. May act as a chaperone-like factor to guide the assembly of the PSI subunits. The polypeptide is Photosystem I assembly protein Ycf3 (Nostoc punctiforme (strain ATCC 29133 / PCC 73102)).